Here is a 352-residue protein sequence, read N- to C-terminus: MSAKTNPGNFFEDFRLGQTIVHATPRTITEGDVALYTSLYGSRFALTSSTPFAQSLGLERAPIDSLLVFHIVFGKTVPDISLNAIANLGYAGGRFGAVVYPGDTLSTTSKVIGLRQNKDGKTGVVYVHSVGVNQWDEVVLEYIRWVMVRKRDPNAPAPETVVPDLPDSVPVTDLTVPYTVSAANYNLAHAGSNYLWDDYEVGEKIDHVDGVTIEEAEHMQATRLYQNTARVHFNLHVEREGRFGRRIVYGGHIISLARSLSFNGLANALSIAAINSGRHTNPSFAGDTIYAWSEILAKMAIPGRTDIGALRVRTVATKDRPCHDFPYRDAEGNYDPAVVLDFDYTVLMPRRG.

In terms of domain architecture, MaoC-like spans Leu16–Ser129. Substrate is bound by residues Pro62–Ser65, Ile85–Leu88, and Gly96–Val98.

In terms of assembly, homodimer.

The catalysed reaction is (2R,3S)-beta-methylmalyl-CoA = 2-methylfumaryl-CoA + H2O. In terms of biological role, involved in the glyoxylate assimilation cycle used to regenerate acetyl-CoA and produce pyruvate as universal precursor for biosynthesis. Catalyzes the reversible dehydration of beta-methylmalyl-CoA ((2R,3S)-beta-methylmalyl-CoA) to yield mesaconyl-CoA (2-methylfumaryl-CoA). The sequence is that of Beta-methylmalyl-CoA dehydratase (mch) from Chloroflexus aurantiacus (strain ATCC 29366 / DSM 635 / J-10-fl).